Here is a 119-residue protein sequence, read N- to C-terminus: Neuropeptide B (119 aa).

The N-terminal stretch at 1–21 (MVRCRTLVAAALALLLTPALA) is a signal peptide. Residues 53 to 119 (SESPALRVGT…SLHKAECQSA (67 aa)) constitute a propeptide that is removed on maturation.

Belongs to the neuropeptide B/W family. In terms of tissue distribution, detected in a variety of tissues. High levels are found in the lymphoid organs, central nervous system, mammary gland and uterus.

The protein localises to the secreted. May be involved in the regulation of feeding, neuroendocrine system, memory and learning. May be involved in the afferent pain pathway. The polypeptide is Neuropeptide B (Npb) (Rattus norvegicus (Rat)).